A 637-amino-acid chain; its full sequence is Serine/threonine protein kinase ypkA (637 aa).

Over residues 20–29 (TFTRSSSTST) the composition is skewed to low complexity. Disordered regions lie at residues 20 to 63 (TFTR…SLVS) and 104 to 140 (SSSV…INAA). Residues 40-61 (VVSQTPSISSTNSNGINASESL) are compositionally biased toward polar residues. The segment covering 104 to 116 (SSSVRPSSSSSHS) has biased composition (low complexity). Polar residues predominate over residues 117-136 (THGQTASFAQSGRPQSTSGG). The 258-residue stretch at 294–551 (FDLLKVVGKG…AAEIKSHHFF (258 aa)) folds into the Protein kinase domain. ATP-binding positions include 300 to 308 (VGKGSFGKV) and Lys-323. Asp-417 (proton acceptor) is an active-site residue. The region spanning 552 to 623 (ANIDWRKLLQ…NRPVAGLGDA (72 aa)) is the AGC-kinase C-terminal domain. A phosphoserine mark is found at Ser-593 and Ser-612. Tyr-613 bears the Phosphotyrosine mark.

It belongs to the protein kinase superfamily. Ser/Thr protein kinase family. Interacts with the sakA MAP kinase.

The catalysed reaction is L-seryl-[protein] + ATP = O-phospho-L-seryl-[protein] + ADP + H(+). The enzyme catalyses L-threonyl-[protein] + ATP = O-phospho-L-threonyl-[protein] + ADP + H(+). In terms of biological role, serine/threonine protein kinase required for vegetative growth and conidiation. Important for fungal survival through the regulation of glycosphingolipid (GSL) biosynthesis and cross talks with MAP kinase pathways such as the cell wall integrity (CWI) and the high osmolarity glycerol (HOG) pathways. This Aspergillus fumigatus (strain ATCC MYA-4609 / CBS 101355 / FGSC A1100 / Af293) (Neosartorya fumigata) protein is Serine/threonine protein kinase ypkA.